The primary structure comprises 680 residues: Translation factor GUF1 homolog, chloroplastic (680 aa).

Residues 1-51 constitute a chloroplast transit peptide; the sequence is MATATASRLAVPAPRTSPQAPGRRRPAAPLPSAPPRPRALSAAPRGRVVCP. The segment at 1-68 is disordered; sequence MATATASRLA…ASTTDAGQDR (68 aa). The span at 28 to 37 shows a compositional bias: pro residues; the sequence is APLPSAPPRP. The span at 38–60 shows a compositional bias: low complexity; sequence RALSAAPRGRVVCPAAPASSPAS. A tr-type G domain is found at 75 to 256; sequence SNIRNFSIIA…AIVTKIPPPQ (182 aa). GTP is bound by residues 84–91, 149–153, and 203–206; these read AHIDHGKS, DTPGH, and NKID.

This sequence belongs to the TRAFAC class translation factor GTPase superfamily. Classic translation factor GTPase family. LepA subfamily.

It is found in the plastid. It localises to the chloroplast. It carries out the reaction GTP + H2O = GDP + phosphate + H(+). Functionally, promotes chloroplast protein synthesis. May act as a fidelity factor of the translation reaction, by catalyzing a one-codon backward translocation of tRNAs on improperly translocated ribosomes. The sequence is that of Translation factor GUF1 homolog, chloroplastic from Oryza sativa subsp. japonica (Rice).